The following is a 396-amino-acid chain: Chaperone protein DnaJ 1 (396 aa).

The J domain maps to 10–75 (DYYKVLGVPK…KKRKEYDEAR (66 aa)). A compositionally biased stretch (gly residues) spans 127 to 137 (LFNRGGAGPGT). The segment at 127–149 (LFNRGGAGPGTGTRTQPRRGQDI) is disordered. The segment at 163 to 241 (GATVPLRMSS…CKGSGRAKSS (79 aa)) adopts a CR-type zinc-finger fold. Positions 176, 179, 192, 195, 215, 218, 229, and 232 each coordinate Zn(2+). CXXCXGXG motif repeat units lie at residues 176 to 183 (CKACSGTG), 192 to 199 (CPTCVGTG), 215 to 222 (CPDCKGRG), and 229 to 236 (CEICKGSG).

It belongs to the DnaJ family. In terms of assembly, homodimer. The cofactor is Zn(2+).

It is found in the cytoplasm. Its function is as follows. Participates actively in the response to hyperosmotic and heat shock by preventing the aggregation of stress-denatured proteins and by disaggregating proteins, also in an autonomous, DnaK-independent fashion. Unfolded proteins bind initially to DnaJ; upon interaction with the DnaJ-bound protein, DnaK hydrolyzes its bound ATP, resulting in the formation of a stable complex. GrpE releases ADP from DnaK; ATP binding to DnaK triggers the release of the substrate protein, thus completing the reaction cycle. Several rounds of ATP-dependent interactions between DnaJ, DnaK and GrpE are required for fully efficient folding. Also involved, together with DnaK and GrpE, in the DNA replication of plasmids through activation of initiation proteins. In Streptomyces avermitilis (strain ATCC 31267 / DSM 46492 / JCM 5070 / NBRC 14893 / NCIMB 12804 / NRRL 8165 / MA-4680), this protein is Chaperone protein DnaJ 1.